The sequence spans 111 residues: Small ribosomal subunit protein bS16 (111 aa).

Residues 92–111 (EKGVKESNEIVEPEGEEVKE) are disordered. A compositionally biased stretch (acidic residues) spans 100–111 (EIVEPEGEEVKE).

This sequence belongs to the bacterial ribosomal protein bS16 family.

In Petrotoga mobilis (strain DSM 10674 / SJ95), this protein is Small ribosomal subunit protein bS16.